The chain runs to 45 residues: Photosystem II reaction center protein K (45 aa).

A propeptide spanning residues 1 to 8 (MEAALLLA) is cleaved from the precursor. A helical transmembrane segment spans residues 24-44 (LPLIPLFFLLLAFVWQAAVGF).

This sequence belongs to the PsbK family. In terms of assembly, PSII is composed of 1 copy each of membrane proteins PsbA, PsbB, PsbC, PsbD, PsbE, PsbF, PsbH, PsbI, PsbJ, PsbK, PsbL, PsbM, PsbT, PsbX, PsbY, PsbZ, Psb30/Ycf12, peripheral proteins PsbO, CyanoQ (PsbQ), PsbU, PsbV and a large number of cofactors. It forms dimeric complexes.

The protein resides in the cellular thylakoid membrane. Its function is as follows. One of the components of the core complex of photosystem II (PSII). PSII is a light-driven water:plastoquinone oxidoreductase that uses light energy to abstract electrons from H(2)O, generating O(2) and a proton gradient subsequently used for ATP formation. It consists of a core antenna complex that captures photons, and an electron transfer chain that converts photonic excitation into a charge separation. This is Photosystem II reaction center protein K from Picosynechococcus sp. (strain ATCC 27264 / PCC 7002 / PR-6) (Agmenellum quadruplicatum).